A 462-amino-acid chain; its full sequence is Ribosomal protein uS12 methylthiotransferase RimO (462 aa).

Residues 10 to 125 (PRIGMVSLGC…VLDAVHRNLP (116 aa)) enclose the MTTase N-terminal domain. Residues Cys-19, Cys-55, Cys-84, Cys-160, Cys-164, and Cys-167 each contribute to the [4Fe-4S] cluster site. Residues 146–388 (LTPRHYAYLK…AVAEALSSAK (243 aa)) form the Radical SAM core domain. The 73-residue stretch at 390–462 (QRRVGATMQV…RGHDLLAQPI (73 aa)) folds into the TRAM domain.

This sequence belongs to the methylthiotransferase family. RimO subfamily. [4Fe-4S] cluster is required as a cofactor.

It localises to the cytoplasm. The enzyme catalyses L-aspartate(89)-[ribosomal protein uS12]-hydrogen + (sulfur carrier)-SH + AH2 + 2 S-adenosyl-L-methionine = 3-methylsulfanyl-L-aspartate(89)-[ribosomal protein uS12]-hydrogen + (sulfur carrier)-H + 5'-deoxyadenosine + L-methionine + A + S-adenosyl-L-homocysteine + 2 H(+). Its function is as follows. Catalyzes the methylthiolation of an aspartic acid residue of ribosomal protein uS12. This is Ribosomal protein uS12 methylthiotransferase RimO from Verminephrobacter eiseniae (strain EF01-2).